We begin with the raw amino-acid sequence, 232 residues long: Peptidyl-prolyl cis-trans isomerase CYP26-1 (232 aa).

The 160-residue stretch at 7–166 folds into the PPIase cyclophilin-type domain; sequence FFDLTVDGKP…KPVVIADCGE (160 aa). A glycan (N-linked (GlcNAc...) asparagine) is linked at asparagine 108. A helical membrane pass occupies residues 212-232; sequence YYLINIVVACMVLMCFWSWFV.

The protein belongs to the cyclophilin-type PPIase family. In terms of tissue distribution, expressed only in flowers.

It localises to the membrane. The enzyme catalyses [protein]-peptidylproline (omega=180) = [protein]-peptidylproline (omega=0). Functionally, PPIases accelerate the folding of proteins. It catalyzes the cis-trans isomerization of proline imidic peptide bonds in oligopeptides. The protein is Peptidyl-prolyl cis-trans isomerase CYP26-1 (CYP26-1) of Arabidopsis thaliana (Mouse-ear cress).